Here is a 138-residue protein sequence, read N- to C-terminus: Basic phospholipase A2 PLA-B' (138 aa).

A signal peptide spans 1 to 16 (MRTLWITAVLLVGVEG). Intrachain disulfides connect C42/C131, C44/C60, C59/C111, C65/C138, C66/C104, C73/C97, and C91/C102. Positions 43, 45, and 47 each coordinate Ca(2+). H63 is an active-site residue. Ca(2+) is bound at residue D64. D105 is a catalytic residue.

It belongs to the phospholipase A2 family. Group II subfamily. D49 sub-subfamily. The cofactor is Ca(2+). Expressed by the venom gland.

It is found in the secreted. It catalyses the reaction a 1,2-diacyl-sn-glycero-3-phosphocholine + H2O = a 1-acyl-sn-glycero-3-phosphocholine + a fatty acid + H(+). In terms of biological role, PLA2 catalyzes the calcium-dependent hydrolysis of the 2-acyl groups in 3-sn-phosphoglycerides. The sequence is that of Basic phospholipase A2 PLA-B' from Protobothrops flavoviridis (Habu).